The sequence spans 887 residues: Pyruvate, phosphate dikinase 2 (887 aa).

At threonine 467 the chain carries Phosphothreonine; by PDRP1. The active-site Tele-phosphohistidine intermediate is the histidine 469. Substrate-binding residues include arginine 575, arginine 632, glutamate 761, glycine 782, threonine 783, asparagine 784, and aspartate 785. Glutamate 761 lines the Mg(2+) pocket. Residue aspartate 785 participates in Mg(2+) binding. Cysteine 847 acts as the Proton donor in catalysis.

The protein belongs to the PEP-utilizing enzyme family. Requires Mg(2+) as cofactor.

The protein resides in the cytoplasm. It catalyses the reaction pyruvate + phosphate + ATP = phosphoenolpyruvate + AMP + diphosphate + H(+). In terms of biological role, formation of phosphoenolpyruvate. The protein is Pyruvate, phosphate dikinase 2 (PPDK2) of Oryza sativa subsp. japonica (Rice).